We begin with the raw amino-acid sequence, 475 residues long: Ribulose bisphosphate carboxylase large chain (475 aa).

Residues 1 to 2 constitute a propeptide that is removed on maturation; it reads MS. An N-acetylproline modification is found at Pro-3. Position 14 is an N6,N6,N6-trimethyllysine (Lys-14). The substrate site is built by Asn-123 and Thr-173. Lys-175 acts as the Proton acceptor in catalysis. A substrate-binding site is contributed by Lys-177. Residues Lys-201, Asp-203, and Glu-204 each coordinate Mg(2+). At Lys-201 the chain carries N6-carboxylysine. His-294 (proton acceptor) is an active-site residue. Residues Arg-295, His-327, and Ser-379 each coordinate substrate.

Belongs to the RuBisCO large chain family. Type I subfamily. As to quaternary structure, heterohexadecamer of 8 large chains and 8 small chains; disulfide-linked. The disulfide link is formed within the large subunit homodimers. Mg(2+) serves as cofactor. In terms of processing, the disulfide bond which can form in the large chain dimeric partners within the hexadecamer appears to be associated with oxidative stress and protein turnover.

Its subcellular location is the plastid. It localises to the chloroplast. The enzyme catalyses 2 (2R)-3-phosphoglycerate + 2 H(+) = D-ribulose 1,5-bisphosphate + CO2 + H2O. It carries out the reaction D-ribulose 1,5-bisphosphate + O2 = 2-phosphoglycolate + (2R)-3-phosphoglycerate + 2 H(+). RuBisCO catalyzes two reactions: the carboxylation of D-ribulose 1,5-bisphosphate, the primary event in carbon dioxide fixation, as well as the oxidative fragmentation of the pentose substrate in the photorespiration process. Both reactions occur simultaneously and in competition at the same active site. The chain is Ribulose bisphosphate carboxylase large chain from Bouvardia ternifolia (Firecrackerbush).